We begin with the raw amino-acid sequence, 113 residues long: Carrot ABA-induced in somatic embryos 3 (113 aa).

Basic and acidic residues-rich tracts occupy residues 1–17 (MASG…RAKQ), 32–52 (EAQE…KEQL), and 65–77 (GETR…KEGY). The tract at residues 1-113 (MASGQEKRSE…IDQSKFRTKS (113 aa)) is disordered.

This sequence belongs to the small hydrophilic plant seed protein family. In terms of tissue distribution, expressed in embryogenic cells, somatic embryos and seeds at the later stages of development. Not detected in leaves.

This Daucus carota (Wild carrot) protein is Carrot ABA-induced in somatic embryos 3.